The primary structure comprises 87 residues: Large ribosomal subunit protein bL27 (87 aa).

The span at 1–11 shows a compositional bias: polar residues; that stretch reads MASKASGGSTR. The interval 1-21 is disordered; the sequence is MASKASGGSTRNGRDSNSKRL.

This sequence belongs to the bacterial ribosomal protein bL27 family.

The chain is Large ribosomal subunit protein bL27 from Hydrogenobaculum sp. (strain Y04AAS1).